We begin with the raw amino-acid sequence, 747 residues long: Myotubularin-related protein 12 (747 aa).

Residues 1 to 14 (MLGKGVVGGGGGTK) are compositionally biased toward gly residues. A disordered region spans residues 1–21 (MLGKGVVGGGGGTKGPKPSFV). The region spanning 205–643 (FDTLKDWCWE…PEIKVWAQRY (439 aa)) is the Myotubularin phosphatase domain. The tract at residues 449–558 (VPVFLLFLDC…KGQRKGMRFK (110 aa)) is interaction with MTM1. Serine 564, serine 601, and serine 716 each carry phosphoserine.

Belongs to the protein-tyrosine phosphatase family. Non-receptor class myotubularin subfamily. As to quaternary structure, heterodimer with lipid phosphatase MTM1. Heterodimer with lipid phosphatase MTMR2.

The protein resides in the cytoplasm. The protein localises to the sarcoplasmic reticulum. Its subcellular location is the myofibril. It localises to the sarcomere. Acts as an adapter for the myotubularin-related phosphatases. Regulates phosphatase MTM1 protein stability and possibly its intracellular location. By stabilizing MTM1 protein levels, required for skeletal muscle maintenance but not for myogenesis. The protein is Myotubularin-related protein 12 (MTMR12) of Pongo abelii (Sumatran orangutan).